The sequence spans 256 residues: Imidazole glycerol phosphate synthase subunit HisF (256 aa).

Catalysis depends on residues Asp-12 and Asp-131.

It belongs to the HisA/HisF family. Heterodimer of HisH and HisF.

The protein localises to the cytoplasm. It catalyses the reaction 5-[(5-phospho-1-deoxy-D-ribulos-1-ylimino)methylamino]-1-(5-phospho-beta-D-ribosyl)imidazole-4-carboxamide + L-glutamine = D-erythro-1-(imidazol-4-yl)glycerol 3-phosphate + 5-amino-1-(5-phospho-beta-D-ribosyl)imidazole-4-carboxamide + L-glutamate + H(+). Its pathway is amino-acid biosynthesis; L-histidine biosynthesis; L-histidine from 5-phospho-alpha-D-ribose 1-diphosphate: step 5/9. Functionally, IGPS catalyzes the conversion of PRFAR and glutamine to IGP, AICAR and glutamate. The HisF subunit catalyzes the cyclization activity that produces IGP and AICAR from PRFAR using the ammonia provided by the HisH subunit. This is Imidazole glycerol phosphate synthase subunit HisF from Micrococcus luteus (strain ATCC 4698 / DSM 20030 / JCM 1464 / CCM 169 / CCUG 5858 / IAM 1056 / NBRC 3333 / NCIMB 9278 / NCTC 2665 / VKM Ac-2230) (Micrococcus lysodeikticus).